A 464-amino-acid polypeptide reads, in one-letter code: Type I restriction enzyme EcoKI specificity subunit (464 aa).

Belongs to the type-I restriction system S methylase family. In terms of assembly, the type I restriction/modification system is composed of three polypeptides R, M and S. The restriction enzyme has stoichiometry R(2)M(2)S(1). The methyltransferase is composed of M(2)S(1). As to quaternary structure, (Microbial infection) Interacts with Escherichia phage T7 protein Ocr; this interaction leads to the inhibition of the methyltransferase restriction enzyme M.EcoKI composed of M(2)S(1).

Functionally, the specificity (S) subunit of a type I restriction enzyme; this subunit dictates DNA sequence specificity. The M and S subunits together form a methyltransferase (MTase) that methylates A-2 on the top and A-3 on the bottom strand of the sequence 5'-AACN(6)GTGC-3'. In the presence of the R subunit the complex can also act as an endonuclease, binding to the same target sequence but cutting the DNA some distance from this site. Whether the DNA is cut or modified depends on the methylation state of the target sequence. When the target site is unmodified, the DNA is cut. When the target site is hemimethylated, the complex acts as a maintenance MTase modifying the DNA so that both strands become methylated. After locating a non-methylated recognition site, the enzyme complex serves as a molecular motor that translocates DNA in an ATP-dependent manner until a collision occurs that triggers cleavage. In Escherichia coli (strain K12), this protein is Type I restriction enzyme EcoKI specificity subunit.